The following is a 274-amino-acid chain: 2,3,4,5-tetrahydropyridine-2,6-dicarboxylate N-succinyltransferase (274 aa).

Substrate-binding residues include Arg106 and Asp143.

This sequence belongs to the transferase hexapeptide repeat family. In terms of assembly, homotrimer.

Its subcellular location is the cytoplasm. It carries out the reaction (S)-2,3,4,5-tetrahydrodipicolinate + succinyl-CoA + H2O = (S)-2-succinylamino-6-oxoheptanedioate + CoA. The protein operates within amino-acid biosynthesis; L-lysine biosynthesis via DAP pathway; LL-2,6-diaminopimelate from (S)-tetrahydrodipicolinate (succinylase route): step 1/3. The polypeptide is 2,3,4,5-tetrahydropyridine-2,6-dicarboxylate N-succinyltransferase (Rickettsia conorii (strain ATCC VR-613 / Malish 7)).